The following is a 733-amino-acid chain: Protein PAT1 homolog 2 (733 aa).

2 disordered regions span residues 42-75 (LDQE…PEAL) and 337-366 (LHPQ…PDPY). Over residues 49 to 59 (EPVKLEDDHTK) the composition is skewed to basic and acidic residues. Positions 346 to 356 (SQRQRPQSSSR) are enriched in low complexity.

It belongs to the PAT1 family. Interacts with ribonucleoprotein complex components. Interacts with cpeb. In terms of tissue distribution, oocyte-specific protein. Expressed throughout oogenesis but is not detectable in eggs, embryos, nor in adult tissues (at protein level).

It is found in the cytoplasm. The protein resides in the nucleus. In terms of biological role, RNA-binding protein that acts as a translational repressor. When overexpressed, able to disperse P-bodies. This chain is Protein PAT1 homolog 2 (patl2), found in Xenopus laevis (African clawed frog).